Here is a 189-residue protein sequence, read N- to C-terminus: UPF0301 protein CTA_0231 (189 aa).

It belongs to the UPF0301 (AlgH) family.

In Chlamydia trachomatis serovar A (strain ATCC VR-571B / DSM 19440 / HAR-13), this protein is UPF0301 protein CTA_0231.